A 283-amino-acid polypeptide reads, in one-letter code: Bifunctional protein FolD (283 aa).

Residues 164–166, S189, and I230 each bind NADP(+); that span reads GRS.

This sequence belongs to the tetrahydrofolate dehydrogenase/cyclohydrolase family. As to quaternary structure, homodimer.

The catalysed reaction is (6R)-5,10-methylene-5,6,7,8-tetrahydrofolate + NADP(+) = (6R)-5,10-methenyltetrahydrofolate + NADPH. It catalyses the reaction (6R)-5,10-methenyltetrahydrofolate + H2O = (6R)-10-formyltetrahydrofolate + H(+). The protein operates within one-carbon metabolism; tetrahydrofolate interconversion. Catalyzes the oxidation of 5,10-methylenetetrahydrofolate to 5,10-methenyltetrahydrofolate and then the hydrolysis of 5,10-methenyltetrahydrofolate to 10-formyltetrahydrofolate. The protein is Bifunctional protein FolD of Lactobacillus delbrueckii subsp. bulgaricus (strain ATCC BAA-365 / Lb-18).